The primary structure comprises 171 residues: Putative antiporter subunit mnhG2 (171 aa).

Helical transmembrane passes span 11-31 (IAALLIFLGSIIAVISAIGIV), 51-71 (VLLTLVGVLIYFTNEQSFFSV), and 72-92 (RLLLSIVFINLTSPVGMHLVA). Over residues 144 to 156 (DVQKQRQKEKQQE) the composition is skewed to basic and acidic residues. Positions 144–171 (DVQKQRQKEKQQEENIESLSEARRETKD) are disordered.

It belongs to the CPA3 antiporters (TC 2.A.63) subunit G family. May form a heterooligomeric complex that consists of seven subunits: mnhA2, mnhB2, mnhC2, mnhD2, mnhE2, mnhF2 and mnhG2.

Its subcellular location is the cell membrane. This chain is Putative antiporter subunit mnhG2 (mnhG2), found in Staphylococcus haemolyticus (strain JCSC1435).